Here is an 842-residue protein sequence, read N- to C-terminus: MDFPSTLRPSLFMAGPLGMTDGPDLSFMCSWRDALTLPGAQPQNCRDQTSSFAKNLLWEPSTPGPLPLVPPGPDPWDPGLAAQDFLFRGGHYYQYQSRVVLDVTEQLSRFLWDHGDIAFAPLGKLMLENFRLEGNRGYSKKVTIVSVKRLLQDLGGHQPWGCPWASLSRRLRRFSILGGPVLSRSVSLLMGRLLHEELATRWEQLLMDEAFTGGALAWLPGRTARAGQLVYPSGGALDKLYFQEVSVNSGGNPRVLEDPGHIQLRGPVRQVVTSTVQGETLLAVRSDYHCAVWKIDKQEPPAPLQVLQVEKGATGISLSPHLSGELAICSRSGTVCLWTPQDGLQTIYKDPETLAFRDPSPWRWADFTAHPRVLTVGDRTGVKMVDIQGPPGCGLLLFCAGAEAACQKGERVLLAQYLGQPGPASTSLHLICTQFSIYLMDERLPLVPMLKWDHGLPSAPLLARLLPPASPGYPRPLLLGGQGGQVQLLHIAGEGTSIPQLAGPPQSLPSITDSLSAFPLLEPKRQQQLQERLEAPVIGLAAAPPCASAPGLLLFQLSAAGDVFYQHLRIQQTSSLREPDHPAPERPASRAAAPPVDQGSTPSWTSRASARCSRWLEALMELSPTNPVWAAPTFSHRRFLGHMERQKSQETLAQKLQAAMAKGQLLRPGDLGTLPKAEPPPAPQCSQQDELTERLTKAWEGQAAAWWKRHQDQTSGSQRQSKRPKRRTQLSSTFSSFTSYMDSPDASSAPHSQDLSNSEACPQPPRTPPSQELTQELWAQGVQHERRQTLRDYMAKLPLQDNPGPVATPPSQTSSRQTRSFRQQTPVLSGSHPPRKKPRMGF.

Disordered stretches follow at residues 574–605 (SSLR…PSWT), 667–690 (RPGD…QQDE), and 702–842 (QAAA…RMGF). The segment covering 577-588 (REPDHPAPERPA) has biased composition (basic and acidic residues). A compositionally biased stretch (polar residues) spans 745 to 760 (DASSAPHSQDLSNSEA). Residues 783–794 (QHERRQTLRDYM) are compositionally biased toward basic and acidic residues. Thr-808 carries the post-translational modification Phosphothreonine. Over residues 809-826 (PPSQTSSRQTRSFRQQTP) the composition is skewed to low complexity. Over residues 833 to 842 (PPRKKPRMGF) the composition is skewed to basic residues.

Component of the transcription factor SL1/TIF-IB complex, composed of TBP and at least TAF1A, TAF1B, TAF1C and TAF1D. In the complex interacts directly with TBP, TAF1A and TAF1B. Interaction of the SL1/TIF-IB subunits with TBP excludes interaction of TBP with the transcription factor IID (TFIID) subunits. Interacts with MYC and RRN3. Interacts with p53/TP53; the interaction prevents the association of SL1/TIF-IB with UBTF and represses RNA polymerase I transcription. Part of Pol I pre-initiation complex (PIC), in which Pol I core assembles with RRN3 and promoter-bound UTBF and SL1/TIF-IB complex.

It localises to the nucleus. It is found in the nucleolus. Functionally, component of the transcription factor SL1/TIF-IB complex, which is involved in the assembly of the PIC (pre-initiation complex) during RNA polymerase I-dependent transcription. The rate of PIC formation probably is primarily dependent on the rate of association of SL1/TIF-IB with the rDNA promoter. SL1/TIF-IB is involved in stabilization of nucleolar transcription factor 1/UBTF on rDNA. Formation of SL1/TIF-IB excludes the association of TBP with TFIID subunits. Recruits RNA polymerase I to the rRNA gene promoter via interaction with RRN3. The chain is TATA box-binding protein-associated factor, RNA polymerase I, subunit C (Taf1c) from Rattus norvegicus (Rat).